The sequence spans 309 residues: Taste receptor type 2 member 8 (309 aa).

Residues 1 to 7 (MFSPADN) lie on the Extracellular side of the membrane. The chain crosses the membrane as a helical span at residues 8-28 (IFIILITGEFILGILGNGYIA). At 29–50 (LVNWIDWIKKKKISTIDYILTN) the chain is on the cytoplasmic side. Residues 51–71 (LVISRICLISVMVVNGIVIAV) form a helical membrane-spanning segment. Over 72 to 82 (YPDVYTKSKLQ) the chain is Extracellular. The helical transmembrane segment at 83 to 103 (IAICTFWTFANYLNMWITTCL) threads the bilayer. Over 104 to 131 (NVFYFLKIANSSHPLFLWLKQKIDMVVR) the chain is Cytoplasmic. A helical transmembrane segment spans residues 132–152 (WILLGCFAISLLVSLIAAIVL). At 153–184 (SYDYRFHAIAKHKRNITEMFHVSKRPYFEPLT) the chain is on the extracellular side. Residue N167 is glycosylated (N-linked (GlcNAc...) asparagine). A helical membrane pass occupies residues 185–205 (LFNLFAIVPFIVSLISFFLLV). The Cytoplasmic portion of the chain corresponds to 206-239 (RSLWRHTKQIKLYATGGRDPSTEVHVRAIKTMTS). Residues 240–260 (FIFLFFLYYISSILVTFSYLM) form a helical membrane-spanning segment. Residues 261-266 (TKYKLA) lie on the Extracellular side of the membrane. The helical transmembrane segment at 267–287 (VEFGEIVAILYPLGHSLILIV) threads the bilayer. Residues 288–309 (LNNKLRQTFVRMLTCRKIACVI) lie on the Cytoplasmic side of the membrane.

The protein belongs to the G-protein coupled receptor T2R family.

The protein localises to the membrane. Receptor that may play a role in the perception of bitterness and is gustducin-linked. May play a role in sensing the chemical composition of the gastrointestinal content. The activity of this receptor may stimulate alpha gustducin, mediate PLC-beta-2 activation and lead to the gating of TRPM5. This Gorilla gorilla gorilla (Western lowland gorilla) protein is Taste receptor type 2 member 8 (TAS2R8).